An 838-amino-acid polypeptide reads, in one-letter code: Leucine--tRNA ligase 1 (838 aa).

The 'HIGH' region motif lies at 40–51 (PYPSGAGLHVGH). A 'KMSKS' region motif is present at residues 608 to 612 (KMSKS). Lys-611 is a binding site for ATP.

Belongs to the class-I aminoacyl-tRNA synthetase family.

It localises to the cytoplasm. It carries out the reaction tRNA(Leu) + L-leucine + ATP = L-leucyl-tRNA(Leu) + AMP + diphosphate. In Rhizobium johnstonii (strain DSM 114642 / LMG 32736 / 3841) (Rhizobium leguminosarum bv. viciae), this protein is Leucine--tRNA ligase 1.